The sequence spans 62 residues: uncharacterized protein (62 aa).

It localises to the plastid. The protein resides in the chloroplast. This is an uncharacterized protein from Chlamydomonas reinhardtii (Chlamydomonas smithii).